Here is a 387-residue protein sequence, read N- to C-terminus: Patatin group A-2 (387 aa).

Residues 1–23 form the signal peptide; that stretch reads MATTKSFLILIVMILATTSSTFA. One can recognise a PNPLA domain in the interval 32 to 230; that stretch reads LSIDGGGIKG…TVADPALLSV (199 aa). The short motif at 36–41 is the GXGXXG element; that stretch reads GGGIKG. The GXSXG signature appears at 75–79; that stretch reads GTSTG. Ser-77 (nucleophile) is an active-site residue. Asn-115 carries an N-linked (GlcNAc...) asparagine glycan. Asp-216 (proton acceptor) is an active-site residue. Positions 216–218 match the DGA/G motif; it reads DGA. Residues 361 to 385 are a coiled coil; that stretch reads ETYEEALKRFAKLLSDRKKLRANKA.

The protein belongs to the patatin family. In terms of tissue distribution, tuber and stolon.

The protein resides in the vacuole. Functionally, probable lipolytic acyl hydrolase (LAH), an activity which is thought to be involved in the response of tubers to pathogens. This is Patatin group A-2 from Solanum tuberosum (Potato).